The sequence spans 169 residues: 6,7-dimethyl-8-ribityllumazine synthase (169 aa).

Residues tryptophan 27, 61–63 (SYE), and 90–92 (VLI) contribute to the 5-amino-6-(D-ribitylamino)uracil site. Residue 95-96 (ST) coordinates (2S)-2-hydroxy-3-oxobutyl phosphate. Histidine 98 serves as the catalytic Proton donor. Residue phenylalanine 123 coordinates 5-amino-6-(D-ribitylamino)uracil. A (2S)-2-hydroxy-3-oxobutyl phosphate-binding site is contributed by arginine 137.

It belongs to the DMRL synthase family. Homopentamer.

It is found in the mitochondrion intermembrane space. It catalyses the reaction (2S)-2-hydroxy-3-oxobutyl phosphate + 5-amino-6-(D-ribitylamino)uracil = 6,7-dimethyl-8-(1-D-ribityl)lumazine + phosphate + 2 H2O + H(+). The protein operates within cofactor biosynthesis; riboflavin biosynthesis; riboflavin from 2-hydroxy-3-oxobutyl phosphate and 5-amino-6-(D-ribitylamino)uracil: step 1/2. In terms of biological role, catalyzes the formation of 6,7-dimethyl-8-ribityllumazine by condensation of 5-amino-6-(D-ribitylamino)uracil with 3,4-dihydroxy-2-butanone 4-phosphate. This is the penultimate step in the biosynthesis of riboflavin. In Saccharomyces cerevisiae (strain ATCC 204508 / S288c) (Baker's yeast), this protein is 6,7-dimethyl-8-ribityllumazine synthase (RIB4).